Reading from the N-terminus, the 44-residue chain is Small, acid-soluble spore protein N (44 aa).

The tract at residues 1-44 is disordered; sequence MGNPKKNSKDFAPNHIGTQSKKAGGNKGKQMQDQTGKQPIVDNG.

The protein belongs to the SspN family.

It localises to the spore core. The polypeptide is Small, acid-soluble spore protein N (Bacillus anthracis (strain A0248)).